Consider the following 581-residue polypeptide: NADH-quinone oxidoreductase subunit C/D (581 aa).

An NADH dehydrogenase I subunit C region spans residues 1–172 (MSATDLVSEL…PLFNMTAALF (172 aa)). An NADH dehydrogenase I subunit D region spans residues 196-581 (ELMILNYGPH…IDYVMSDVDR (386 aa)).

The protein in the N-terminal section; belongs to the complex I 30 kDa subunit family. It in the C-terminal section; belongs to the complex I 49 kDa subunit family. As to quaternary structure, NDH-1 is composed of 13 different subunits. Subunits NuoB, CD, E, F, and G constitute the peripheral sector of the complex.

The protein resides in the cell inner membrane. It catalyses the reaction a quinone + NADH + 5 H(+)(in) = a quinol + NAD(+) + 4 H(+)(out). NDH-1 shuttles electrons from NADH, via FMN and iron-sulfur (Fe-S) centers, to quinones in the respiratory chain. The immediate electron acceptor for the enzyme in this species is believed to be ubiquinone. Couples the redox reaction to proton translocation (for every two electrons transferred, four hydrogen ions are translocated across the cytoplasmic membrane), and thus conserves the redox energy in a proton gradient. The chain is NADH-quinone oxidoreductase subunit C/D from Rhodopseudomonas palustris (strain HaA2).